The following is a 313-amino-acid chain: Ribosomal RNA small subunit methyltransferase H (313 aa).

S-adenosyl-L-methionine contacts are provided by residues 35 to 37 (GGH), aspartate 55, phenylalanine 79, aspartate 100, and glutamine 107.

The protein belongs to the methyltransferase superfamily. RsmH family.

The protein localises to the cytoplasm. The enzyme catalyses cytidine(1402) in 16S rRNA + S-adenosyl-L-methionine = N(4)-methylcytidine(1402) in 16S rRNA + S-adenosyl-L-homocysteine + H(+). Specifically methylates the N4 position of cytidine in position 1402 (C1402) of 16S rRNA. The chain is Ribosomal RNA small subunit methyltransferase H from Burkholderia ambifaria (strain ATCC BAA-244 / DSM 16087 / CCUG 44356 / LMG 19182 / AMMD) (Burkholderia cepacia (strain AMMD)).